Consider the following 405-residue polypeptide: Tyrosine--tRNA ligase (405 aa).

The short motif at 46 to 55 is the 'HIGH' region element; the sequence is PTRPDIHLGH. The 'KMSKS' region motif lies at 230 to 234; it reads KMSKS. Lys-233 serves as a coordination point for ATP. The S4 RNA-binding domain occupies 341–404; that stretch reads MGLAALMVKA…GKKKFVKIVV (64 aa).

This sequence belongs to the class-I aminoacyl-tRNA synthetase family. TyrS type 2 subfamily. Homodimer.

Its subcellular location is the cytoplasm. It carries out the reaction tRNA(Tyr) + L-tyrosine + ATP = L-tyrosyl-tRNA(Tyr) + AMP + diphosphate + H(+). Catalyzes the attachment of tyrosine to tRNA(Tyr) in a two-step reaction: tyrosine is first activated by ATP to form Tyr-AMP and then transferred to the acceptor end of tRNA(Tyr). In Bdellovibrio bacteriovorus (strain ATCC 15356 / DSM 50701 / NCIMB 9529 / HD100), this protein is Tyrosine--tRNA ligase.